The chain runs to 177 residues: 3-hydroxydecanoyl-[acyl-carrier-protein] dehydratase (177 aa).

Residue His76 is part of the active site.

The protein belongs to the thioester dehydratase family. FabA subfamily. As to quaternary structure, homodimer.

Its subcellular location is the cytoplasm. The enzyme catalyses a (3R)-hydroxyacyl-[ACP] = a (2E)-enoyl-[ACP] + H2O. It carries out the reaction (3R)-hydroxydecanoyl-[ACP] = (2E)-decenoyl-[ACP] + H2O. It catalyses the reaction (2E)-decenoyl-[ACP] = (3Z)-decenoyl-[ACP]. The protein operates within lipid metabolism; fatty acid biosynthesis. Its function is as follows. Necessary for the introduction of cis unsaturation into fatty acids. Catalyzes the dehydration of (3R)-3-hydroxydecanoyl-ACP to E-(2)-decenoyl-ACP and then its isomerization to Z-(3)-decenoyl-ACP. Can catalyze the dehydratase reaction for beta-hydroxyacyl-ACPs with saturated chain lengths up to 16:0, being most active on intermediate chain length. This is 3-hydroxydecanoyl-[acyl-carrier-protein] dehydratase from Haemophilus influenzae (strain PittGG).